Consider the following 113-residue polypeptide: MKTSKTVAKLLFVVGALVYLVGLWISCPLLSGKGYFLGVLMTATFGNYAYLRAEKLGQLDDFFTHICQLVALITIGLLFIGVLNAPINTYEMVIYPIAFFVCLFGQMRLFRSA.

Topologically, residues 1 to 9 (MKTSKTVAK) are cytoplasmic. A helical membrane pass occupies residues 10 to 20 (LLFVVGALVYL). The Periplasmic portion of the chain corresponds to 21–33 (VGLWISCPLLSGK). Residues 34–51 (GYFLGVLMTATFGNYAYL) form a helical membrane-spanning segment. Residues 52 to 61 (RAEKLGQLDD) lie on the Cytoplasmic side of the membrane. A helical membrane pass occupies residues 62–82 (FFTHICQLVALITIGLLFIGV). The Periplasmic portion of the chain corresponds to 83–84 (LN). The chain crosses the membrane as a helical span at residues 85–105 (APINTYEMVIYPIAFFVCLFG). Residues 106-113 (QMRLFRSA) are Cytoplasmic-facing.

The protein localises to the cell inner membrane. In Escherichia coli (strain K12), this protein is Inner membrane protein YiaB (yiaB).